The following is a 387-amino-acid chain: F-box only protein 4 (387 aa).

Serine 12 and serine 48 each carry phosphoserine. The F-box domain occupies 56–102; the sequence is ASTLTRLPIDVQLYILSFLSPHDLCQLGSTNHYWNETVRDPILWRYF.

Homodimer. Part of the SCF (SKP1-CUL1-F-box) E3 ubiquitin-protein ligase complex SCF(FBXO4) formed of CUL1, SKP1, RBX1 and FBXO4. Interacts with TERF1; this interaction is prevented in the presence of GNL3L. Identified in a complex with CRYAB and CCND1. In terms of processing, phosphorylation at Ser-12 varies during the cell cycle. It is low in resting cells and high in the S phase and the G2/M phase of the cell cycle. Phosphorylation is decreased during late G1 phase. Phosphorylation at Ser-12 promotes homodimerization and is necessary for optimal ubiquitin ligase activity towards CCND1.

Its subcellular location is the cytoplasm. It functions in the pathway protein modification; protein ubiquitination. Substrate recognition component of a SCF (SKP1-CUL1-F-box protein) E3 ubiquitin-protein ligase complex that mediates the ubiquitination and subsequent proteasomal degradation of target proteins. Promotes ubiquitination of cyclin-D1 (CCND1) and its subsequent proteasomal degradation. However, it does not act as a major regulator of CCND1 stability during the G1/S transition. Recognizes TERF1 and promotes its ubiquitination together with UBE2D1. Promotes ubiquitination of FXR1 following phosphorylation of FXR1 by GSK3B, leading to FXR1 degradation by the proteasome. In Homo sapiens (Human), this protein is F-box only protein 4 (FBXO4).